The sequence spans 412 residues: Protein Mb3436c (412 aa).

Lys-227 carries the N6-(pyridoxal phosphate)lysine modification.

It belongs to the DegT/DnrJ/EryC1 family.

The polypeptide is Protein Mb3436c (Mycobacterium bovis (strain ATCC BAA-935 / AF2122/97)).